Reading from the N-terminus, the 69-residue chain is Cytochrome b-c1 complex subunit 6-1, mitochondrial (69 aa).

Cystine bridges form between Cys-17-Cys-59 and Cys-31-Cys-45.

It belongs to the UQCRH/QCR6 family. As to quaternary structure, component of the ubiquinol-cytochrome c oxidoreductase (cytochrome b-c1 complex, complex III, CIII), a multisubunit enzyme composed of 10 subunits. The complex is composed of 3 respiratory subunits cytochrome b (MT-CYB), cytochrome c1 (CYC1-1 or CYC1-2) and Rieske protein (UCR1-1 or UCR1-2), 2 core protein subunits MPPalpha1 (or MPPalpha2) and MPPB, and 5 low-molecular weight protein subunits QCR7-1 (or QCR7-2), UCRQ-1 (or UCRQ-2), QCR9, UCRY and probably QCR6-1 (or QCR6-2). The complex exists as an obligatory dimer and forms supercomplexes (SCs) in the inner mitochondrial membrane with NADH-ubiquinone oxidoreductase (complex I, CI), resulting in different assemblies (supercomplexes SCI(1)III(2) and SCI(2)III(4)).

It localises to the mitochondrion inner membrane. Its function is as follows. Component of the ubiquinol-cytochrome c oxidoreductase, a multisubunit transmembrane complex that is part of the mitochondrial electron transport chain which drives oxidative phosphorylation. The respiratory chain contains 3 multisubunit complexes succinate dehydrogenase (complex II, CII), ubiquinol-cytochrome c oxidoreductase (cytochrome b-c1 complex, complex III, CIII) and cytochrome c oxidase (complex IV, CIV), that cooperate to transfer electrons derived from NADH and succinate to molecular oxygen, creating an electrochemical gradient over the inner membrane that drives transmembrane transport and the ATP synthase. The cytochrome b-c1 complex catalyzes electron transfer from ubiquinol to cytochrome c, linking this redox reaction to translocation of protons across the mitochondrial inner membrane, with protons being carried across the membrane as hydrogens on the quinol. In the process called Q cycle, 2 protons are consumed from the matrix, 4 protons are released into the intermembrane space and 2 electrons are passed to cytochrome c. The protein is Cytochrome b-c1 complex subunit 6-1, mitochondrial (QCR6-1) of Arabidopsis thaliana (Mouse-ear cress).